A 196-amino-acid polypeptide reads, in one-letter code: MSEPLLTVADSLKDRARAALGSRNLILVGLMGAGKSAVGRIVASQLGIPFIDSDHEIERVSRMTIPELFAAYGEDEFRALETRVMKRLLKGGPRVVSTGGGAFINERTRRHIIKGGVSVWLKADLDVLWERVNKRDNRPLLKTENPKQTLEGLMNARYPIYAQADLTVLSRDVRKEIMADEVLKAMIEAQKESAAS.

32–37 contributes to the ATP binding site; it reads GAGKSA. Ser-36 contacts Mg(2+). Positions 54, 78, and 100 each coordinate substrate. Arg-138 serves as a coordination point for ATP. Arg-157 serves as a coordination point for substrate. Arg-174 contacts ATP.

The protein belongs to the shikimate kinase family. Monomer. Mg(2+) serves as cofactor.

Its subcellular location is the cytoplasm. It catalyses the reaction shikimate + ATP = 3-phosphoshikimate + ADP + H(+). Its pathway is metabolic intermediate biosynthesis; chorismate biosynthesis; chorismate from D-erythrose 4-phosphate and phosphoenolpyruvate: step 5/7. In terms of biological role, catalyzes the specific phosphorylation of the 3-hydroxyl group of shikimic acid using ATP as a cosubstrate. The polypeptide is Shikimate kinase (Rhizobium leguminosarum bv. trifolii (strain WSM2304)).